A 340-amino-acid polypeptide reads, in one-letter code: DNA-directed RNA polymerase subunit alpha (340 aa).

The alpha N-terminal domain (alpha-NTD) stretch occupies residues 1 to 236 (MSVIQKNWQE…DQLQLFINFE (236 aa)). The tract at residues 252-340 (FNKNLLRKVD…DLAKKLEEPY (89 aa)) is alpha C-terminal domain (alpha-CTD).

The protein belongs to the RNA polymerase alpha chain family. As to quaternary structure, homodimer. The RNAP catalytic core consists of 2 alpha, 1 beta, 1 beta' and 1 omega subunit. When a sigma factor is associated with the core the holoenzyme is formed, which can initiate transcription.

The catalysed reaction is RNA(n) + a ribonucleoside 5'-triphosphate = RNA(n+1) + diphosphate. Its function is as follows. DNA-dependent RNA polymerase catalyzes the transcription of DNA into RNA using the four ribonucleoside triphosphates as substrates. The polypeptide is DNA-directed RNA polymerase subunit alpha (Rhodospirillum rubrum (strain ATCC 11170 / ATH 1.1.1 / DSM 467 / LMG 4362 / NCIMB 8255 / S1)).